Consider the following 193-residue polypeptide: ATP-dependent Clp protease proteolytic subunit 2 (193 aa).

Serine 98 functions as the Nucleophile in the catalytic mechanism. Histidine 123 is a catalytic residue.

Belongs to the peptidase S14 family. In terms of assembly, fourteen ClpP subunits assemble into 2 heptameric rings which stack back to back to give a disk-like structure with a central cavity, resembling the structure of eukaryotic proteasomes.

The protein resides in the cytoplasm. It catalyses the reaction Hydrolysis of proteins to small peptides in the presence of ATP and magnesium. alpha-casein is the usual test substrate. In the absence of ATP, only oligopeptides shorter than five residues are hydrolyzed (such as succinyl-Leu-Tyr-|-NHMec, and Leu-Tyr-Leu-|-Tyr-Trp, in which cleavage of the -Tyr-|-Leu- and -Tyr-|-Trp bonds also occurs).. Functionally, cleaves peptides in various proteins in a process that requires ATP hydrolysis. Has a chymotrypsin-like activity. Plays a major role in the degradation of misfolded proteins. In Bacillus cereus (strain ATCC 10987 / NRS 248), this protein is ATP-dependent Clp protease proteolytic subunit 2.